The chain runs to 365 residues: Flagellar P-ring protein (365 aa).

Positions 1-21 (MKSLRLVALFCCLLPLGMAHA) are cleaved as a signal peptide.

This sequence belongs to the FlgI family. In terms of assembly, the basal body constitutes a major portion of the flagellar organelle and consists of four rings (L,P,S, and M) mounted on a central rod.

It localises to the periplasm. It is found in the bacterial flagellum basal body. Assembles around the rod to form the L-ring and probably protects the motor/basal body from shearing forces during rotation. The polypeptide is Flagellar P-ring protein (Aeromonas hydrophila subsp. hydrophila (strain ATCC 7966 / DSM 30187 / BCRC 13018 / CCUG 14551 / JCM 1027 / KCTC 2358 / NCIMB 9240 / NCTC 8049)).